The sequence spans 424 residues: Protein shisa-9 (424 aa).

Residues 1 to 23 form the signal peptide; that stretch reads MRRVLRLLLGCFLTELCARMCRA. The Extracellular portion of the chain corresponds to 24-149; that stretch reads QERSGHGQLA…DPLHDPTKDK (126 aa). 3 N-linked (GlcNAc...) asparagine glycosylation sites follow: N45, N89, and N116. The helical transmembrane segment at 150-170 threads the bilayer; the sequence is TNLIVYIICGVVAVMVLVGIF. Over 171 to 424 the chain is Cytoplasmic; sequence TKLGLEKAHR…ITNSKTEVTV (254 aa). Disordered stretches follow at residues 333 to 373 and 389 to 424; these read PRAF…TWDP and LGIA…EVTV. Polar residues-rich tracts occupy residues 362–373 and 402–424; these read YNSTANFKTWDP and TRTQ…EVTV.

This sequence belongs to the shisa family. SHISA9 subfamily. Component of some AMPA receptors (ionotropic glutamate receptors) complex, at least composed of some AMPA receptor (GRIA1, GRIA2 and/or GRIA3), CACNG2 and SHISA9, as well as low level of DLG4. In terms of tissue distribution, brain-specific. Mainly expressed in neurons, including in hippocampus, cerebral cortex, striatum, thalamus, olfactory bulb and cerebellum. Expressed in most brain structures during embryonic and postnatal development.

The protein localises to the cell projection. Its subcellular location is the dendritic spine membrane. It localises to the synapse. Its function is as follows. Regulator of short-term neuronal synaptic plasticity in the dentate gyrus. Associates with AMPA receptors (ionotropic glutamate receptors) in synaptic spines and promotes AMPA receptor desensitization at excitatory synapses. The chain is Protein shisa-9 (Shisa9) from Mus musculus (Mouse).